Reading from the N-terminus, the 154-residue chain is Aminoalkylphosphonate N-acetyltransferase (154 aa).

The N-acetyltransferase domain maps to 14–154 (CELRHATTED…QSHFRFTKAL (141 aa)).

In terms of assembly, homodimer. A divalent metal cation serves as cofactor.

The enzyme catalyses aminomethylphosphonate + acetyl-CoA = 2-N-acetamidomethylphosphonate + CoA. It catalyses the reaction (S)-1-aminoethylphosphonate + acetyl-CoA = [(1S)-1-acetamidoethyl]phosphonate + CoA. Its function is as follows. Aminoalkylphosphonate N-acetyltransferase which is able to acetylate a range of aminoalkylphosphonic acids, including (S)-1-aminoethylphosphonate ((S)-1AEP) and 2-aminoethylphosphonate, using acetyl-CoA as acetyl donor. Its physiological role in S.typhimurium is unclear. However, by acetylating (S)-1AEP, PhnO would protect against the deleterious effects of (S)-1AEP, a structural analog of D-alanine that has antibacterial properties. The chain is Aminoalkylphosphonate N-acetyltransferase from Salmonella typhimurium (strain LT2 / SGSC1412 / ATCC 700720).